The sequence spans 311 residues: MTSMSHHRSLQAELETLTTEAFRPELAEIDQLPTLEIARLMNGEDATVPAAVAARLPQIAAAIDAVADRMARGGRLVYAGAGTAGRLGVLDASECPPTFNTDPSEVVGLIAGGPSAMVTSIEGAEDSKELAAGDLAGLGLTADDTVVGVSASGRTPYAIGAVEYARARGALTVGLSCNADSALAAAADHGIEIVAGPELLTGSTRLKAGTAQKLVLNMLSTITMIRLGKTYGNLMVDVRASNEKLRARSRRIVALATGAADEEVERALAATDGEVKNAILTILGGVDGPTAARLLEESDGHLRAALAAAPR.

The 164-residue stretch at 66 to 229 folds into the SIS domain; it reads VADRMARGGR…STITMIRLGK (164 aa). The active-site Proton donor is the Glu94. Glu125 is an active-site residue.

It belongs to the GCKR-like family. MurNAc-6-P etherase subfamily. As to quaternary structure, homodimer.

The catalysed reaction is N-acetyl-D-muramate 6-phosphate + H2O = N-acetyl-D-glucosamine 6-phosphate + (R)-lactate. The protein operates within amino-sugar metabolism; N-acetylmuramate degradation. Its function is as follows. Specifically catalyzes the cleavage of the D-lactyl ether substituent of MurNAc 6-phosphate, producing GlcNAc 6-phosphate and D-lactate. This is N-acetylmuramic acid 6-phosphate etherase from Streptomyces avermitilis (strain ATCC 31267 / DSM 46492 / JCM 5070 / NBRC 14893 / NCIMB 12804 / NRRL 8165 / MA-4680).